The sequence spans 336 residues: tRNA N6-adenosine threonylcarbamoyltransferase (336 aa).

Fe cation-binding residues include His-114 and His-118. Substrate-binding positions include Leu-136–Gly-140, Asp-169, Gly-182, Asp-186, and Asn-275. Position 302 (Asp-302) interacts with Fe cation.

The protein belongs to the KAE1 / TsaD family. Fe(2+) serves as cofactor.

The protein resides in the cytoplasm. The catalysed reaction is L-threonylcarbamoyladenylate + adenosine(37) in tRNA = N(6)-L-threonylcarbamoyladenosine(37) in tRNA + AMP + H(+). Its function is as follows. Required for the formation of a threonylcarbamoyl group on adenosine at position 37 (t(6)A37) in tRNAs that read codons beginning with adenine. Is involved in the transfer of the threonylcarbamoyl moiety of threonylcarbamoyl-AMP (TC-AMP) to the N6 group of A37, together with TsaE and TsaB. TsaD likely plays a direct catalytic role in this reaction. The chain is tRNA N6-adenosine threonylcarbamoyltransferase from Streptococcus agalactiae serotype V (strain ATCC BAA-611 / 2603 V/R).